Consider the following 409-residue polypeptide: Torsin-4A (409 aa).

A compositionally biased stretch (basic and acidic residues) spans 1–16 (MGEQDPSDRLRGDQLK). Disordered stretches follow at residues 1–28 (MGEQ…SFSQ) and 75–99 (DNLH…KGRV). Positions 17-28 (EPNQNGKGSFSQ) are enriched in polar residues. Residues 88-98 (PRKRKKKRKGR) are compositionally biased toward basic residues. A helical transmembrane segment spans residues 120 to 136 (CLYLLCIIVFLQVYNAI). 192 to 199 (GPTGVGKS) serves as a coordination point for ATP.

This sequence belongs to the ClpA/ClpB family. Torsin subfamily.

The protein localises to the membrane. The polypeptide is Torsin-4A (tor4a) (Danio rerio (Zebrafish)).